A 326-amino-acid chain; its full sequence is MGFCFCLSSGGSTDKSQIYEITDYGQENAVLYSDHHVVPQNLGSVSSLAGGKGLNQDAAILHLGYGTEEGALCGVFDGHGPRGAFVSKNVRNQLPSILLGHMNNHSVTRDWKLICETSCLEMDKRILKVKKIHDCSASGTTAVLAVKHGNQVMVANLGDSRAVMIGTSEDGETKVAQLTNDLKPSVPSEAERIRKRNGRVLALESEPHILRVWLPTENRPGLAMSRAFGDFLLKSYGVIATPQVSTHQITSSDQFLLLASDGVWDVLSNEEVATVVMKSASEAGAANEVAEAATNAWIQKFPTVKIDDISVVCLSLNKKHNPQPQI.

The region spanning 42-316 (LGSVSSLAGG…DDISVVCLSL (275 aa)) is the PPM-type phosphatase domain. 4 residues coordinate Mn(2+): Asp77, Gly78, Asp261, and Asp307.

It belongs to the PP2C family. Mg(2+) is required as a cofactor. The cofactor is Mn(2+).

The enzyme catalyses O-phospho-L-seryl-[protein] + H2O = L-seryl-[protein] + phosphate. It catalyses the reaction O-phospho-L-threonyl-[protein] + H2O = L-threonyl-[protein] + phosphate. In Arabidopsis thaliana (Mouse-ear cress), this protein is Probable protein phosphatase 2C 61.